An 845-amino-acid polypeptide reads, in one-letter code: Beta-mannosidase B (845 aa).

Glu-432 serves as the catalytic Proton donor. N-linked (GlcNAc...) asparagine glycans are attached at residues Asn-717 and Asn-723.

This sequence belongs to the glycosyl hydrolase 2 family. Beta-mannosidase B subfamily.

It carries out the reaction Hydrolysis of terminal, non-reducing beta-D-mannose residues in beta-D-mannosides.. The protein operates within glycan metabolism; N-glycan degradation. Exoglycosidase that cleaves the single beta-linked mannose residue from the non-reducing end of beta-mannosidic oligosaccharides of various complexity and length. Prefers mannobiose over mannotriose and has no activity against polymeric mannan. Is also severely restricted by galactosyl substitutions at the +1 subsite. In Aspergillus clavatus (strain ATCC 1007 / CBS 513.65 / DSM 816 / NCTC 3887 / NRRL 1 / QM 1276 / 107), this protein is Beta-mannosidase B (mndB).